The primary structure comprises 368 residues: tRNA-specific 2-thiouridylase MnmA (368 aa).

Residues 11 to 18 (GMSGGVDS) and Met-37 contribute to the ATP site. Residues 97-99 (NPD) are interaction with target base in tRNA. Residue Cys-102 is the Nucleophile of the active site. Cys-102 and Cys-199 form a disulfide bridge. Gly-127 serves as a coordination point for ATP. Residues 149–151 (KDQ) are interaction with tRNA. The Cysteine persulfide intermediate role is filled by Cys-199. Residues 311-312 (RY) form an interaction with tRNA region.

The protein belongs to the MnmA/TRMU family. As to quaternary structure, interacts with TusE.

Its subcellular location is the cytoplasm. It catalyses the reaction S-sulfanyl-L-cysteinyl-[protein] + uridine(34) in tRNA + AH2 + ATP = 2-thiouridine(34) in tRNA + L-cysteinyl-[protein] + A + AMP + diphosphate + H(+). Catalyzes the 2-thiolation of uridine at the wobble position (U34) of tRNA(Lys), tRNA(Glu) and tRNA(Gln), leading to the formation of s(2)U34, the first step of tRNA-mnm(5)s(2)U34 synthesis. Sulfur is provided by IscS, via a sulfur-relay system. Binds ATP and its substrate tRNAs. The polypeptide is tRNA-specific 2-thiouridylase MnmA (Salmonella arizonae (strain ATCC BAA-731 / CDC346-86 / RSK2980)).